Consider the following 338-residue polypeptide: Alanine racemase (338 aa).

Lysine 33 acts as the Proton acceptor; specific for D-alanine in catalysis. Lysine 33 is modified (N6-(pyridoxal phosphate)lysine). Arginine 126 lines the substrate pocket. Tyrosine 236 serves as the catalytic Proton acceptor; specific for L-alanine. Residue methionine 284 participates in substrate binding.

This sequence belongs to the alanine racemase family. It depends on pyridoxal 5'-phosphate as a cofactor.

The enzyme catalyses L-alanine = D-alanine. It functions in the pathway amino-acid biosynthesis; D-alanine biosynthesis; D-alanine from L-alanine: step 1/1. Catalyzes the interconversion of L-alanine and D-alanine. May also act on other amino acids. The protein is Alanine racemase (alr) of Aquifex aeolicus (strain VF5).